A 74-amino-acid polypeptide reads, in one-letter code: Sec-independent protein translocase protein TatA (74 aa).

Residues 1–21 traverse the membrane as a helical segment; it reads MGSFSIWHWLIVLLIVVLVFG.

It belongs to the TatA/E family. As to quaternary structure, the Tat system comprises two distinct complexes: a TatABC complex, containing multiple copies of TatA, TatB and TatC subunits, and a separate TatA complex, containing only TatA subunits. Substrates initially bind to the TatABC complex, which probably triggers association of the separate TatA complex to form the active translocon.

The protein localises to the cell inner membrane. Functionally, part of the twin-arginine translocation (Tat) system that transports large folded proteins containing a characteristic twin-arginine motif in their signal peptide across membranes. TatA could form the protein-conducting channel of the Tat system. In Nitrosospira multiformis (strain ATCC 25196 / NCIMB 11849 / C 71), this protein is Sec-independent protein translocase protein TatA.